The chain runs to 389 residues: TelA-like protein SH1505 (389 aa).

This sequence belongs to the TelA family.

In Staphylococcus haemolyticus (strain JCSC1435), this protein is TelA-like protein SH1505.